The sequence spans 407 residues: Arylacetamide deacetylase-like 4 (407 aa).

Residues Met1–Pro4 lie on the Cytoplasmic side of the membrane. Residues Trp5–Phe25 traverse the membrane as a helical; Signal-anchor for type II membrane protein segment. Over Glu26–Ile407 the chain is Lumenal. Positions His119–Gly121 match the Involved in the stabilization of the negatively charged intermediate by the formation of the oxyanion hole motif. N-linked (GlcNAc...) asparagine glycosylation occurs at Asn168. Ser193 is an active-site residue. N-linked (GlcNAc...) asparagine glycosylation is present at Asn269. Residues Asp347 and His377 contribute to the active site.

It belongs to the 'GDXG' lipolytic enzyme family.

The protein localises to the membrane. This is Arylacetamide deacetylase-like 4 (AADACL4) from Homo sapiens (Human).